The following is a 101-amino-acid chain: UPF0235 protein MmarC7_0309 (101 aa).

Belongs to the UPF0235 family.

The chain is UPF0235 protein MmarC7_0309 from Methanococcus maripaludis (strain C7 / ATCC BAA-1331).